The sequence spans 386 residues: GTPase Obg (386 aa).

Residues 4–162 (SNFVDYVKIY…RTVILQLKLL (159 aa)) enclose the Obg domain. The disordered stretch occupies residues 18–44 (KGGRGSSHFRREKYIPKGGPDGGDGGR). Residues 163-329 (ADVGLVGFPN…LKDLLWKELN (167 aa)) form the OBG-type G domain. Residues 169–176 (GFPNAGKS), 194–198 (FTTLE), 216–219 (DIPG), 283–286 (TKSD), and 310–312 (SSI) each bind GTP. Residues serine 176 and threonine 196 each coordinate Mg(2+). Residues 357 to 386 (YIFPVDEDEDDPDEEYEEYWDDDEDEDTRK) are disordered.

It belongs to the TRAFAC class OBG-HflX-like GTPase superfamily. OBG GTPase family. In terms of assembly, monomer. It depends on Mg(2+) as a cofactor.

The protein localises to the cytoplasm. An essential GTPase which binds GTP, GDP and possibly (p)ppGpp with moderate affinity, with high nucleotide exchange rates and a fairly low GTP hydrolysis rate. Plays a role in control of the cell cycle, stress response, ribosome biogenesis and in those bacteria that undergo differentiation, in morphogenesis control. This chain is GTPase Obg, found in Parabacteroides distasonis (strain ATCC 8503 / DSM 20701 / CIP 104284 / JCM 5825 / NCTC 11152).